Reading from the N-terminus, the 626-residue chain is Chaperone protein HtpG (626 aa).

Residues 1-339 (MSTNQETRGF…SNDLPLNVSR (339 aa)) are a; substrate-binding. Residues 340-555 (EILQDNKVTA…NDQMTTQMAK (216 aa)) form a b region. The interval 556-626 (LFAAAGQPVP…FIKRVNSLLS (71 aa)) is c.

This sequence belongs to the heat shock protein 90 family. Homodimer.

The protein localises to the cytoplasm. Functionally, molecular chaperone. Has ATPase activity. The chain is Chaperone protein HtpG from Histophilus somni (strain 129Pt) (Haemophilus somnus).